Consider the following 393-residue polypeptide: Isocitrate dehydrogenase [NAD] subunit gamma, mitochondrial (393 aa).

The N-terminal 39 residues, 1-39, are a transit peptide targeting the mitochondrion; the sequence is MALKVATVAGSAAKAVLGPALLCRPWEVLGAHEVPSRNI. Citrate-binding residues include threonine 120 and asparagine 133. Residues arginine 136, arginine 167, and aspartate 254 each coordinate substrate. Aspartate 254 contributes to the Mn(2+) binding site. Positions 312, 313, and 324 each coordinate ADP.

Belongs to the isocitrate and isopropylmalate dehydrogenases family. As to quaternary structure, heterooligomer of subunits alpha (IDH3A), beta (IDH3B), and gamma (IDH3G) in the apparent ratio of 2:1:1. The heterodimer containing one IDH3A and one IDH3B subunit and the heterodimer containing one IDH3A and one IDH3G subunit assemble into a heterotetramer (which contains two subunits of IDH3A, one of IDH3B and one of IDH3G) and further into the heterooctamer. Mg(2+) serves as cofactor. The cofactor is Mn(2+).

The protein localises to the mitochondrion. Its activity is regulated as follows. The heterotetramer and the heterodimer composed of IDH3A and IDH3G subunits can be allosterically activated by citrate (CIT) or/and ADP, and the two activators can act independently or synergistically. The heterodimer composed of IDH3A and IDH3B subunits cannot be allosterically regulated and the allosteric regulation of the heterotetramer is through the IDH3G subunit and not the IDH3B subunit. The IDH3G subunit contains the allosteric site which consists of a CIT-binding site and an ADP-binding site, and the binding of CIT and ADP causes conformational changes at the allosteric site which are transmitted to the active site in the catalytic subunit (IDH3A) through a cascade of conformational changes at the heterodimer interface, leading to stabilization of the isocitrate-binding at the active site and thus activation of the enzyme. ATP can activate the heterotetramer and the heterodimer composed of IDH3A and IDH3G subunits at low concentrations but inhibits their activities at high concentrations, whereas ATP exhibits only inhibitory effect on the heterodimer composed of IDH3A and IDH3B subunits. Its function is as follows. Regulatory subunit which plays a role in the allosteric regulation of the enzyme catalyzing the decarboxylation of isocitrate (ICT) into alpha-ketoglutarate. The heterodimer composed of the alpha (IDH3A) and beta (IDH3B) subunits and the heterodimer composed of the alpha (IDH3A) and gamma (IDH3G) subunits, have considerable basal activity but the full activity of the heterotetramer (containing two subunits of IDH3A, one of IDH3B and one of IDH3G) requires the assembly and cooperative function of both heterodimers. This chain is Isocitrate dehydrogenase [NAD] subunit gamma, mitochondrial (IDH3G), found in Homo sapiens (Human).